A 277-amino-acid chain; its full sequence is Diaminopimelate epimerase (277 aa).

Substrate contacts are provided by asparagine 13, glutamine 46, and asparagine 66. The active-site Proton donor is cysteine 75. Residues 76–77, asparagine 160, asparagine 193, and 211–212 each bind substrate; these read GN and ER. Cysteine 220 serves as the catalytic Proton acceptor. 221–222 serves as a coordination point for substrate; it reads GS.

The protein belongs to the diaminopimelate epimerase family. In terms of assembly, homodimer.

It localises to the cytoplasm. The enzyme catalyses (2S,6S)-2,6-diaminopimelate = meso-2,6-diaminopimelate. It functions in the pathway amino-acid biosynthesis; L-lysine biosynthesis via DAP pathway; DL-2,6-diaminopimelate from LL-2,6-diaminopimelate: step 1/1. Functionally, catalyzes the stereoinversion of LL-2,6-diaminopimelate (L,L-DAP) to meso-diaminopimelate (meso-DAP), a precursor of L-lysine and an essential component of the bacterial peptidoglycan. This chain is Diaminopimelate epimerase, found in Legionella pneumophila (strain Corby).